Consider the following 388-residue polypeptide: Quinolone resistance protein NorA (388 aa).

Transmembrane regions (helical) follow at residues 5 to 25 (IFVL…VIPV), 42 to 62 (LLVA…GTLA), 69 to 89 (LIIC…AVGH), 99 to 119 (VIGG…IADV), 129 to 149 (FGYM…IGGF), 157 to 177 (MPFY…VVLI), 201 to 221 (WKVF…LSAF), 239 to 259 (DISI…IYFF), 269 to 289 (LTFI…LVIA), 293 to 313 (WTIM…RPAI), 331 to 351 (LNST…GALF), and 355 to 375 (IEAP…IVLI).

Belongs to the major facilitator superfamily. TCR/Tet family.

It is found in the cell membrane. Functionally, involved in quinolone resistance. May constitute a membrane-associated active efflux pump of hydrophilic quinolones. The polypeptide is Quinolone resistance protein NorA (norA) (Staphylococcus aureus (strain MRSA252)).